The sequence spans 269 residues: MSEMMIVAVTGGKGGTGKSTLSANLFFYFIENYKTALIDCDVETPNLPYLTGCEDLFLAREVFIEVPNIEEGKTYNYNNVCKEGALLKVGDKLIFIEDLCSGCKACGINSNITFKKKSIGKIYEKKFDNGYLIVGKSNLGERKTAKIVTETKKYGLSKNCEINIVDTAAGTHCNVVRALINADKVLIVTEPTPFGVSDAKRIIKVVEKLNIPYKIVLNRYGISDLKIGYNFKIPYDKRIVECYCKGESFLKYNDLRNYIEEIANWIIWG.

ATP contacts are provided by residues 12–19 (GKGGTGKS) and 130–137 (GYLIVGKS).

The protein to M.jannaschii MJ0578.

This is an uncharacterized protein from Methanocaldococcus jannaschii (strain ATCC 43067 / DSM 2661 / JAL-1 / JCM 10045 / NBRC 100440) (Methanococcus jannaschii).